Reading from the N-terminus, the 120-residue chain is MSQSMYSYPAMTANVGDMAGYTGTTQSLGADIASERTAPSRACQGDLGMSHQDWQAQWNQAMEALARAYRRCRRALRQIGVLERPVGDSSDCGTIRVGSFRGRWLDPRHAGPATAADAGD.

The protein belongs to the WXG100 family. ESAT-6 subfamily.

It is found in the secreted. The protein is ESAT-6-like protein EsxQ of Mycobacterium bovis (strain ATCC BAA-935 / AF2122/97).